The sequence spans 312 residues: DnaJ homolog subfamily B member 7 (312 aa).

A J domain is found at 3-69; sequence DYYEVLGVQR…EKRDIYDKYG (67 aa). The disordered stretch occupies residues 272 to 312; that stretch reads SWVTNKKEPSIFSAGFKEGGRRKKKKHKEGQKKKKSNKRNH. The segment covering 291–312 has biased composition (basic residues); it reads GRRKKKKHKEGQKKKKSNKRNH.

Functionally, probably acts as a co-chaperone. In Mus musculus (Mouse), this protein is DnaJ homolog subfamily B member 7 (Dnajb7).